Here is a 280-residue protein sequence, read N- to C-terminus: Nitrogenase iron protein (280 aa).

9–16 contacts ATP; sequence GKGGIGKS. Cys-97 provides a ligand contact to [4Fe-4S] cluster. Arg-100 carries the ADP-ribosylarginine; by dinitrogenase reductase ADP-ribosyltransferase modification. Residue Cys-132 coordinates [4Fe-4S] cluster.

This sequence belongs to the NifH/BchL/ChlL family. Homodimer. [4Fe-4S] cluster is required as a cofactor. The reversible ADP-ribosylation of Arg-100 inactivates the nitrogenase reductase and regulates nitrogenase activity.

It catalyses the reaction N2 + 8 reduced [2Fe-2S]-[ferredoxin] + 16 ATP + 16 H2O = H2 + 8 oxidized [2Fe-2S]-[ferredoxin] + 2 NH4(+) + 16 ADP + 16 phosphate + 6 H(+). Functionally, the key enzymatic reactions in nitrogen fixation are catalyzed by the nitrogenase complex, which has 2 components: the iron protein and the molybdenum-iron protein. This is Nitrogenase iron protein from Desulforudis audaxviator (strain MP104C).